The following is a 462-amino-acid chain: Serine--tRNA ligase, cytoplasmic (462 aa).

Position 246 to 248 (246 to 248) interacts with L-serine; sequence TSE. Residues 279–281 and Val-295 each bind ATP; that span reads RRE. An L-serine-binding site is contributed by Glu-302. 366-369 lines the ATP pocket; that stretch reads ELVS. Thr-404 serves as a coordination point for L-serine.

It belongs to the class-II aminoacyl-tRNA synthetase family. Type-1 seryl-tRNA synthetase subfamily. As to quaternary structure, homodimer. The tRNA molecule binds across the dimer.

The protein localises to the cytoplasm. Its subcellular location is the cytosol. The catalysed reaction is tRNA(Ser) + L-serine + ATP = L-seryl-tRNA(Ser) + AMP + diphosphate + H(+). Functionally, catalyzes the attachment of serine to tRNA(Ser) in a two-step reaction: serine is first activated by ATP to form Ser-AMP and then transferred to the acceptor end of tRNA(Ser). This chain is Serine--tRNA ligase, cytoplasmic (SES1), found in Candida albicans (strain SC5314 / ATCC MYA-2876) (Yeast).